The sequence spans 104 residues: Putative Fis-like DNA-binding protein (104 aa).

Positions 80 to 99 (QTKASELLGLNRGTLRKKLK) form a DNA-binding region, H-T-H motif.

Belongs to the transcriptional regulatory Fis family.

This chain is Putative Fis-like DNA-binding protein, found in Pseudomonas aeruginosa (strain ATCC 15692 / DSM 22644 / CIP 104116 / JCM 14847 / LMG 12228 / 1C / PRS 101 / PAO1).